The primary structure comprises 469 residues: Adenosylhomocysteinase (469 aa).

Residues Thr63, Asp139, and Glu164 each coordinate substrate. 165-167 (TTT) serves as a coordination point for NAD(+). Residues Lys194 and Asp198 each contribute to the substrate site. Residues Asn199, 228–233 (GYGDVG), Glu251, Asn300, 321–323 (IGH), and Asn375 each bind NAD(+).

This sequence belongs to the adenosylhomocysteinase family. NAD(+) is required as a cofactor.

It localises to the cytoplasm. It catalyses the reaction S-adenosyl-L-homocysteine + H2O = L-homocysteine + adenosine. It participates in amino-acid biosynthesis; L-homocysteine biosynthesis; L-homocysteine from S-adenosyl-L-homocysteine: step 1/1. May play a key role in the regulation of the intracellular concentration of adenosylhomocysteine. The sequence is that of Adenosylhomocysteinase from Pseudomonas syringae pv. syringae (strain B728a).